The chain runs to 363 residues: Cytochrome c oxidase subunit 2 (363 aa).

Residues 1–23 form a disordered region; sequence MTPRGPGRLQRLSQCRPQRGSGG. The N-terminal stretch at 1 to 41 is a signal peptide; the sequence is MTPRGPGRLQRLSQCRPQRGSGGPARGLRQLALAAMLGALA. The next 2 membrane-spanning stretches (helical) occupy residues 71 to 91 and 118 to 138; these read LWIGAVIASLAVGVIVWGLIF and LVLTVIPFLIISVLFYFTVVV. Histidine 254, cysteine 295, cysteine 299, and histidine 303 together coordinate Cu cation.

The protein belongs to the cytochrome c oxidase subunit 2 family. Cu cation serves as cofactor. The cofactor is heme.

It is found in the cell membrane. It carries out the reaction 4 Fe(II)-[cytochrome c] + O2 + 8 H(+)(in) = 4 Fe(III)-[cytochrome c] + 2 H2O + 4 H(+)(out). Its function is as follows. Subunits I and II form the functional core of the enzyme complex. Electrons originating in cytochrome c are transferred via heme a and Cu(A) to the binuclear center formed by heme a3 and Cu(B). This is Cytochrome c oxidase subunit 2 (ctaC) from Mycobacterium bovis (strain ATCC BAA-935 / AF2122/97).